The primary structure comprises 225 residues: Perlwapin-like protein (225 aa).

The N-terminal stretch at 1 to 19 is a signal peptide; it reads MNHLWLFIVTVSCIYLVYG. 4 cysteine pairs are disulfide-bonded: cysteine 27–cysteine 57, cysteine 36–cysteine 61, cysteine 43–cysteine 56, and cysteine 49–cysteine 65. One can recognise a WAP 1; atypical domain in the interval 27–68; that stretch reads CKVKFMGTACPLGRLVCEEDGDCLGVNQVCCYDGCGTTCHNK. Asparagine 67 carries N-linked (GlcNAc...) asparagine glycosylation. The WAP 2 domain occupies 117-169; that stretch reads IIPSPELLCPVVTVRYAFCRFSTYTPCHTSNDCAVPGMKCCPDVCGKRCKFPI. Disulfide bonds link cysteine 125–cysteine 157, cysteine 135–cysteine 161, cysteine 143–cysteine 156, and cysteine 149–cysteine 165. The N-linked (GlcNAc...) asparagine glycan is linked to asparagine 170. Positions 176-225 are disordered; the sequence is QFQQTPLKPTVPLPQYQQTPLQPTVPSSQPPLQPTVPSPQSYNYKGACST. Low complexity predominate over residues 188 to 201; the sequence is LPQYQQTPLQPTVP. Over residues 203-212 the composition is skewed to pro residues; sequence SQPPLQPTVP. Positions 213 to 225 are enriched in polar residues; the sequence is SPQSYNYKGACST.

Component of the acid-soluble organic matrix of calcified layers of the shell (at protein level).

The protein localises to the secreted. The sequence is that of Perlwapin-like protein from Lottia gigantea (Giant owl limpet).